Consider the following 345-residue polypeptide: Methylthioribose-1-phosphate isomerase (345 aa).

Residues 44–46, Arg86, and Gln194 each bind substrate; that span reads RGA. The Proton donor role is filled by Asp235. 245–246 contributes to the substrate binding site; sequence NK.

Belongs to the eIF-2B alpha/beta/delta subunits family. MtnA subfamily.

The catalysed reaction is 5-(methylsulfanyl)-alpha-D-ribose 1-phosphate = 5-(methylsulfanyl)-D-ribulose 1-phosphate. The protein operates within amino-acid biosynthesis; L-methionine biosynthesis via salvage pathway; L-methionine from S-methyl-5-thio-alpha-D-ribose 1-phosphate: step 1/6. Its function is as follows. Catalyzes the interconversion of methylthioribose-1-phosphate (MTR-1-P) into methylthioribulose-1-phosphate (MTRu-1-P). In Desulfitobacterium hafniense (strain Y51), this protein is Methylthioribose-1-phosphate isomerase.